The primary structure comprises 299 residues: Oxygen-dependent coproporphyrinogen-III oxidase (299 aa).

Serine 92 is a binding site for substrate. Positions 96 and 106 each coordinate a divalent metal cation. The Proton donor role is filled by histidine 106. 108-110 (NVR) provides a ligand contact to substrate. Histidine 145 and histidine 175 together coordinate a divalent metal cation. The important for dimerization stretch occupies residues 240-275 (YVEFNLVWDRGTLFGLQTGGRTESILMSMPPLVRWE). 258-260 (GGR) serves as a coordination point for substrate.

The protein belongs to the aerobic coproporphyrinogen-III oxidase family. As to quaternary structure, homodimer. A divalent metal cation is required as a cofactor.

Its subcellular location is the cytoplasm. The enzyme catalyses coproporphyrinogen III + O2 + 2 H(+) = protoporphyrinogen IX + 2 CO2 + 2 H2O. The protein operates within porphyrin-containing compound metabolism; protoporphyrin-IX biosynthesis; protoporphyrinogen-IX from coproporphyrinogen-III (O2 route): step 1/1. Its function is as follows. Involved in the heme biosynthesis. Catalyzes the aerobic oxidative decarboxylation of propionate groups of rings A and B of coproporphyrinogen-III to yield the vinyl groups in protoporphyrinogen-IX. The sequence is that of Oxygen-dependent coproporphyrinogen-III oxidase from Salmonella typhi.